A 795-amino-acid chain; its full sequence is Putative replication origin-binding protein (795 aa).

The Helicase ATP-binding domain maps to 121-289; it reads WLSNDKIKTL…DNFGKSIVVN (169 aa). 134–141 serves as a coordination point for ATP; it reads SPMGTGKT.

Belongs to the mimivirus R1 family.

Its function is as follows. Probably involved in DNA replication. May bind the genome origin of replication (ori). This chain is Putative replication origin-binding protein, found in Acanthamoeba polyphaga (Amoeba).